Here is a 165-residue protein sequence, read N- to C-terminus: Bark lectin isoform 1 (165 aa).

Residues asparagine 27 and asparagine 57 are each glycosylated (N-linked (GlcNAc...) asparagine). Cystine bridges form between cysteine 33/cysteine 80 and cysteine 126/cysteine 133.

The protein belongs to the protease inhibitor I3 (leguminous Kunitz-type inhibitor) family. As to quaternary structure, dimer.

Its function is as follows. Glucose and N-acetylglucosamine binding lectin. Has hemagglutinating activity against human and rabbit erythrocytes which does not require divalent cations. Inhibits factor Xa and, to a lesser extent, trypsin. Does not inhibit neutrophil elastase, human plasma kallikrein, papain, human plasmin, porcine pancreatic kallikrein and bovin chymotrypsin. Has insecticidal activity against the termite species N.corniger. Induces apoptosis in prostrate cancer cell lines DU145 and PC3. The polypeptide is Bark lectin isoform 1 (Crateva tapia (Garlic-pear tree)).